Consider the following 569-residue polypeptide: S-(+)-linalool synthase, chloroplastic (569 aa).

Residues methionine 1 to proline 39 constitute a chloroplast transit peptide. (2E)-geranyl diphosphate is bound by residues arginine 294, aspartate 331, aspartate 335, arginine 472, and aspartate 475. The Mg(2+) site is built by aspartate 331 and aspartate 335. The DDXXD motif signature appears at aspartate 331–aspartate 335. Aspartate 475, serine 479, and glutamate 483 together coordinate Mg(2+).

The protein belongs to the terpene synthase family. Tpsb subfamily. The cofactor is Mg(2+). It depends on Mn(2+) as a cofactor. In terms of tissue distribution, predominantly expressed in flowers but also in stems and siliques.

The protein resides in the plastid. The protein localises to the chloroplast. The enzyme catalyses (2E)-geranyl diphosphate + H2O = (S)-linalool + diphosphate. It functions in the pathway secondary metabolite biosynthesis; terpenoid biosynthesis. Its function is as follows. Involved in monoterpene (C10) biosynthesis. The major product is (S)-linalool. The sequence is that of S-(+)-linalool synthase, chloroplastic from Arabidopsis thaliana (Mouse-ear cress).